The primary structure comprises 201 residues: NADH-quinone oxidoreductase subunit C 1 (201 aa).

Belongs to the complex I 30 kDa subunit family. As to quaternary structure, NDH-1 is composed of 14 different subunits. Subunits NuoB, C, D, E, F, and G constitute the peripheral sector of the complex.

Its subcellular location is the cell inner membrane. The catalysed reaction is a quinone + NADH + 5 H(+)(in) = a quinol + NAD(+) + 4 H(+)(out). In terms of biological role, NDH-1 shuttles electrons from NADH, via FMN and iron-sulfur (Fe-S) centers, to quinones in the respiratory chain. The immediate electron acceptor for the enzyme in this species is believed to be ubiquinone. Couples the redox reaction to proton translocation (for every two electrons transferred, four hydrogen ions are translocated across the cytoplasmic membrane), and thus conserves the redox energy in a proton gradient. In Rhizobium meliloti (strain 1021) (Ensifer meliloti), this protein is NADH-quinone oxidoreductase subunit C 1.